Reading from the N-terminus, the 542-residue chain is 4-coumarate--CoA ligase 2 (542 aa).

Residues Ser189, Ser190, Gly191, Thr192, Thr193, and Lys197 each coordinate ATP. (E)-4-coumaroyl-AMP contacts are provided by Tyr239 and Ser243. Tyr239 and Ser243 together coordinate (E)-caffeoyl-AMP. Residues Tyr239 and Ser243 each contribute to the (E)-feruloyl-AMP site. Lys260 is a CoA binding site. The tract at residues 262-331 (DIVSFLELIQ…AKFPNAKLGQ (70 aa)) is SBD1. Ala309 is a binding site for (E)-4-coumaroyl-AMP. Ala309 contacts (E)-caffeoyl-AMP. Ala309 is a (E)-feruloyl-AMP binding site. Positions 331, 332, and 336 each coordinate ATP. Positions 332, 336, 344, 420, 435, 437, and 441 each coordinate (E)-4-coumaroyl-AMP. Residues Gly332, Thr336, Met344, Asp420, Arg435, Lys437, and Lys441 each contribute to the (E)-caffeoyl-AMP site. The (E)-feruloyl-AMP site is built by Gly332, Thr336, Met344, Asp420, Arg435, Lys437, and Lys441. 2 residues coordinate AMP: Gly332 and Thr336. The tract at residues 332–399 (GYGMTEAGPV…IRGDQIMKGY (68 aa)) is SBD2. The ATP site is built by Asp420 and Arg435. An AMP-binding site is contributed by Asp420. Residues Lys437 and Lys441 each contribute to the AMP site. CoA contacts are provided by Lys443 and Gly444. Gln446 contributes to the AMP binding site. Position 526 (Lys526) interacts with ATP.

This sequence belongs to the ATP-dependent AMP-binding enzyme family. Mg(2+) serves as cofactor. In terms of tissue distribution, mainly expressed in old stems and, to a lower extent, in flowers (e.g. in ovary), leaves, young stems, shoot tips and patel limbs.

It catalyses the reaction (E)-4-coumarate + ATP + CoA = (E)-4-coumaroyl-CoA + AMP + diphosphate. The catalysed reaction is (E)-caffeate + ATP + CoA = (E)-caffeoyl-CoA + AMP + diphosphate. The enzyme catalyses (E)-ferulate + ATP + CoA = (E)-feruloyl-CoA + AMP + diphosphate. It carries out the reaction (E)-cinnamate + ATP + CoA = (E)-cinnamoyl-CoA + AMP + diphosphate. It catalyses the reaction (E)-4-coumarate + ATP + H(+) = (E)-4-coumaroyl-AMP + diphosphate. The catalysed reaction is (E)-4-coumaroyl-AMP + CoA = (E)-4-coumaroyl-CoA + AMP + H(+). The enzyme catalyses (E)-caffeate + ATP + H(+) = (E)-caffeoyl-AMP + diphosphate. It carries out the reaction (E)-caffeoyl-AMP + CoA = (E)-caffeoyl-CoA + AMP + H(+). It catalyses the reaction (E)-ferulate + ATP + H(+) = (E)-feruloyl-AMP + diphosphate. The catalysed reaction is (E)-feruloyl-AMP + CoA = (E)-feruloyl-CoA + AMP + H(+). The protein operates within phytoalexin biosynthesis; 3,4',5-trihydroxystilbene biosynthesis; 3,4',5-trihydroxystilbene from trans-4-coumarate: step 1/2. Functionally, major enzyme of the phenylpropanoid pathway that mediates the production of several precursors for numerous metabolites and regulates carbon flow. Catalyzes the formation of CoA thioesters using 4-coumarate, ferulate, caffeate, and cinnamate as substrates. Follows a two-step reaction mechanism, wherein a (hydroxy)cinnamate substrate first undergoes adenylation by ATP leading to an acyl-AMP, followed by a thioesterification in the presence of CoA to yield the final (hydroxy)cinnamoyl-CoA product. Almost inactive toward sinapate. The polypeptide is 4-coumarate--CoA ligase 2 (Nicotiana tabacum (Common tobacco)).